A 295-amino-acid polypeptide reads, in one-letter code: Acetylglutamate kinase (295 aa).

Substrate-binding positions include 61 to 62, R83, and N187; that span reads GG.

Belongs to the acetylglutamate kinase family. ArgB subfamily.

Its subcellular location is the cytoplasm. The catalysed reaction is N-acetyl-L-glutamate + ATP = N-acetyl-L-glutamyl 5-phosphate + ADP. It participates in amino-acid biosynthesis; L-arginine biosynthesis; N(2)-acetyl-L-ornithine from L-glutamate: step 2/4. Catalyzes the ATP-dependent phosphorylation of N-acetyl-L-glutamate. This Methanocorpusculum labreanum (strain ATCC 43576 / DSM 4855 / Z) protein is Acetylglutamate kinase.